A 251-amino-acid polypeptide reads, in one-letter code: Triosephosphate isomerase (251 aa).

A substrate-binding site is contributed by 10–12 (NWK). His95 (electrophile) is an active-site residue. Glu167 serves as the catalytic Proton acceptor. Residues Gly173, Ser213, and 234-235 (GG) each bind substrate.

It belongs to the triosephosphate isomerase family. As to quaternary structure, homodimer.

The protein resides in the cytoplasm. The catalysed reaction is D-glyceraldehyde 3-phosphate = dihydroxyacetone phosphate. It participates in carbohydrate biosynthesis; gluconeogenesis. It functions in the pathway carbohydrate degradation; glycolysis; D-glyceraldehyde 3-phosphate from glycerone phosphate: step 1/1. In terms of biological role, involved in the gluconeogenesis. Catalyzes stereospecifically the conversion of dihydroxyacetone phosphate (DHAP) to D-glyceraldehyde-3-phosphate (G3P). This Acetivibrio thermocellus (strain ATCC 27405 / DSM 1237 / JCM 9322 / NBRC 103400 / NCIMB 10682 / NRRL B-4536 / VPI 7372) (Clostridium thermocellum) protein is Triosephosphate isomerase.